The primary structure comprises 369 residues: Molybdenum import ATP-binding protein ModC (369 aa).

Residues 7–243 (PGQAGIHARF…LDLPMAMTDD (237 aa)) enclose the ABC transporter domain. ATP is bound at residue 41–48 (GQSGSGKT). The Mop domain occupies 304–369 (EGSILNVLAV…AQIKAVSLLA (66 aa)).

The protein belongs to the ABC transporter superfamily. Molybdate importer (TC 3.A.1.8) family. As to quaternary structure, the complex is composed of two ATP-binding proteins (ModC), two transmembrane proteins (ModB) and a solute-binding protein (ModA).

The protein localises to the cell inner membrane. It carries out the reaction molybdate(out) + ATP + H2O = molybdate(in) + ADP + phosphate + H(+). Functionally, part of the ABC transporter complex ModABC involved in molybdenum import. Responsible for energy coupling to the transport system. In Bordetella pertussis (strain Tohama I / ATCC BAA-589 / NCTC 13251), this protein is Molybdenum import ATP-binding protein ModC.